Consider the following 155-residue polypeptide: Small ribosomal subunit protein uS9 (155 aa).

This sequence belongs to the universal ribosomal protein uS9 family.

This chain is Small ribosomal subunit protein uS9, found in Rhizobium johnstonii (strain DSM 114642 / LMG 32736 / 3841) (Rhizobium leguminosarum bv. viciae).